The following is a 241-amino-acid chain: 7-cyano-7-deazaguanine synthase (241 aa).

Residue 9-19 coordinates ATP; the sequence is LSGGLDSSTVL. The Zn(2+) site is built by Cys189, Cys197, Cys200, and Cys203.

It belongs to the QueC family. It depends on Zn(2+) as a cofactor.

It carries out the reaction 7-carboxy-7-deazaguanine + NH4(+) + ATP = 7-cyano-7-deazaguanine + ADP + phosphate + H2O + H(+). It participates in purine metabolism; 7-cyano-7-deazaguanine biosynthesis. Catalyzes the ATP-dependent conversion of 7-carboxy-7-deazaguanine (CDG) to 7-cyano-7-deazaguanine (preQ(0)). In Thermoplasma volcanium (strain ATCC 51530 / DSM 4299 / JCM 9571 / NBRC 15438 / GSS1), this protein is 7-cyano-7-deazaguanine synthase.